Here is a 772-residue protein sequence, read N- to C-terminus: Semaphorin-3A (772 aa).

The N-terminal stretch at 1–20 (MGWFTGIACLFWGILLTARA) is a signal peptide. One can recognise a Sema domain in the interval 31–514 (RLKLSYKEML…STAGVAQLPL (484 aa)). Asparagine 53 is a glycosylation site (N-linked (GlcNAc...) asparagine). A disulfide bridge links cysteine 103 with cysteine 114. Asparagine 125 is a glycosylation site (N-linked (GlcNAc...) asparagine). Cystine bridges form between cysteine 132-cysteine 141, cysteine 269-cysteine 381, cysteine 293-cysteine 341, and cysteine 517-cysteine 535. The Ig-like C2-type domain occupies 577–665 (HGHSLEERII…GFMQTLLKVT (89 aa)). Asparagine 591 carries N-linked (GlcNAc...) asparagine glycosylation. A disulfide bond links cysteine 650 and cysteine 723. Residues 677–691 (LLHKDDDGDGSKTKE) are compositionally biased toward basic and acidic residues. 2 disordered regions span residues 677-698 (LLHKDDDGDGSKTKEMSSSMTP) and 729-772 (RDRK…PRSV). The segment covering 729 to 738 (RDRKQRRQRP) has biased composition (basic residues). A compositionally biased stretch (basic and acidic residues) spans 750 to 772 (HMQESKKGRNRRTHEFERAPRSV).

Belongs to the semaphorin family. Interacts with PLXND1. In terms of tissue distribution, expressed in the dorsal root ganglia.

It is found in the secreted. May be involved in guiding growing axons towards their targets by forming a molecular boundary that instructs axons to engage in the formation of specific nerve tracts. Binds to neuropilin. Involved in the development of the olfactory system and in neuronal control of puberty. This Rattus norvegicus (Rat) protein is Semaphorin-3A (Sema3a).